A 130-amino-acid chain; its full sequence is Methylglyoxal synthase (130 aa).

One can recognise an MGS-like domain in the interval Met-1 to Ala-130. Residues His-11, Lys-15, Thr-37–Thr-40, and Ser-57–Gly-58 each bind substrate. The active-site Proton donor/acceptor is the Asp-63. Residue His-90 coordinates substrate.

The protein belongs to the methylglyoxal synthase family.

It catalyses the reaction dihydroxyacetone phosphate = methylglyoxal + phosphate. In terms of biological role, catalyzes the formation of methylglyoxal from dihydroxyacetone phosphate. The polypeptide is Methylglyoxal synthase (Burkholderia thailandensis (strain ATCC 700388 / DSM 13276 / CCUG 48851 / CIP 106301 / E264)).